The following is a 402-amino-acid chain: UDP-N-acetylmuramoylalanine--D-glutamate ligase (402 aa).

97 to 103 (GTNGKTT) contributes to the ATP binding site.

It belongs to the MurCDEF family.

The protein resides in the cytoplasm. The enzyme catalyses UDP-N-acetyl-alpha-D-muramoyl-L-alanine + D-glutamate + ATP = UDP-N-acetyl-alpha-D-muramoyl-L-alanyl-D-glutamate + ADP + phosphate + H(+). Its pathway is cell wall biogenesis; peptidoglycan biosynthesis. Its function is as follows. Cell wall formation. Catalyzes the addition of glutamate to the nucleotide precursor UDP-N-acetylmuramoyl-L-alanine (UMA). The polypeptide is UDP-N-acetylmuramoylalanine--D-glutamate ligase (Campylobacter jejuni (strain RM1221)).